We begin with the raw amino-acid sequence, 319 residues long: Acetyl-coenzyme A carboxylase carboxyl transferase subunit alpha (319 aa).

One can recognise a CoA carboxyltransferase C-terminal domain in the interval 31–292; that stretch reads EIDSAIRSLR…KTYLSRQLSE (262 aa).

This sequence belongs to the AccA family. As to quaternary structure, acetyl-CoA carboxylase is a heterohexamer composed of biotin carboxyl carrier protein (AccB), biotin carboxylase (AccC) and two subunits each of ACCase subunit alpha (AccA) and ACCase subunit beta (AccD).

Its subcellular location is the cytoplasm. It catalyses the reaction N(6)-carboxybiotinyl-L-lysyl-[protein] + acetyl-CoA = N(6)-biotinyl-L-lysyl-[protein] + malonyl-CoA. It functions in the pathway lipid metabolism; malonyl-CoA biosynthesis; malonyl-CoA from acetyl-CoA: step 1/1. In terms of biological role, component of the acetyl coenzyme A carboxylase (ACC) complex. First, biotin carboxylase catalyzes the carboxylation of biotin on its carrier protein (BCCP) and then the CO(2) group is transferred by the carboxyltransferase to acetyl-CoA to form malonyl-CoA. This is Acetyl-coenzyme A carboxylase carboxyl transferase subunit alpha from Rhodopirellula baltica (strain DSM 10527 / NCIMB 13988 / SH1).